Here is a 513-residue protein sequence, read N- to C-terminus: GMP synthase [glutamine-hydrolyzing] (513 aa).

In terms of domain architecture, Glutamine amidotransferase type-1 spans 8–198 (MILVLDFGSQ…VFGVCECVGE (191 aa)). C85 acts as the Nucleophile in catalysis. Residues H172 and E174 contribute to the active site. In terms of domain architecture, GMPS ATP-PPase spans 199-388 (WSMENFIEIE…LGIPDEIVWR (190 aa)). 226 to 232 (SGGVDSS) provides a ligand contact to ATP.

In terms of assembly, homodimer.

The enzyme catalyses XMP + L-glutamine + ATP + H2O = GMP + L-glutamate + AMP + diphosphate + 2 H(+). It participates in purine metabolism; GMP biosynthesis; GMP from XMP (L-Gln route): step 1/1. Catalyzes the synthesis of GMP from XMP. This Bacillus licheniformis (strain ATCC 14580 / DSM 13 / JCM 2505 / CCUG 7422 / NBRC 12200 / NCIMB 9375 / NCTC 10341 / NRRL NRS-1264 / Gibson 46) protein is GMP synthase [glutamine-hydrolyzing].